The following is a 145-amino-acid chain: D-aminoacyl-tRNA deacylase (145 aa).

Residues 137 to 138 (GP) carry the Gly-cisPro motif, important for rejection of L-amino acids motif.

The protein belongs to the DTD family. Homodimer.

The protein localises to the cytoplasm. The catalysed reaction is glycyl-tRNA(Ala) + H2O = tRNA(Ala) + glycine + H(+). It carries out the reaction a D-aminoacyl-tRNA + H2O = a tRNA + a D-alpha-amino acid + H(+). Its function is as follows. An aminoacyl-tRNA editing enzyme that deacylates mischarged D-aminoacyl-tRNAs. Also deacylates mischarged glycyl-tRNA(Ala), protecting cells against glycine mischarging by AlaRS. Acts via tRNA-based rather than protein-based catalysis; rejects L-amino acids rather than detecting D-amino acids in the active site. By recycling D-aminoacyl-tRNA to D-amino acids and free tRNA molecules, this enzyme counteracts the toxicity associated with the formation of D-aminoacyl-tRNA entities in vivo and helps enforce protein L-homochirality. The protein is D-aminoacyl-tRNA deacylase of Salmonella arizonae (strain ATCC BAA-731 / CDC346-86 / RSK2980).